The primary structure comprises 155 residues: NADPH-dependent 7-cyano-7-deazaguanine reductase (155 aa).

Cys-53 acts as the Thioimide intermediate in catalysis. Residue Asp-60 is the Proton donor of the active site. Substrate contacts are provided by residues 75–77 (VES) and 94–95 (HE).

This sequence belongs to the GTP cyclohydrolase I family. QueF type 1 subfamily.

The protein localises to the cytoplasm. It catalyses the reaction 7-aminomethyl-7-carbaguanine + 2 NADP(+) = 7-cyano-7-deazaguanine + 2 NADPH + 3 H(+). The protein operates within tRNA modification; tRNA-queuosine biosynthesis. Its function is as follows. Catalyzes the NADPH-dependent reduction of 7-cyano-7-deazaguanine (preQ0) to 7-aminomethyl-7-deazaguanine (preQ1). This chain is NADPH-dependent 7-cyano-7-deazaguanine reductase, found in Ruegeria pomeroyi (strain ATCC 700808 / DSM 15171 / DSS-3) (Silicibacter pomeroyi).